Reading from the N-terminus, the 641-residue chain is White-opaque regulator 3 (641 aa).

Over residues 13–27 (ANVNHQQLSQDTNSI) the composition is skewed to polar residues. Disordered stretches follow at residues 13–38 (ANVNHQQLSQDTNSIPQQQLQQQQQP), 146–245 (QLAS…PMTR), and 258–287 (PIIYPKSSNSTNGNNSNGQNSSSIPPPEPR). Composition is skewed to low complexity over residues 28–38 (PQQQLQQQQQP) and 151–160 (QNQDQNQSQN). Polar residues predominate over residues 161–172 (RYEQSSMTSIHT). Residues 173–184 (NDNSSSVNNSPN) show a composition bias toward low complexity. The span at 193–204 (STFQPQHSNEGS) shows a compositional bias: polar residues. Composition is skewed to low complexity over residues 216 to 242 (QQQQQPQQQQQPQQQQQPQQQQQPQQP) and 264 to 280 (SSNSTNGNNSNGQNSSS). The dksA C4-type zinc finger occupies 317-337 (CRRCGSEIPLAERRFVLCPSC). Disordered regions lie at residues 366-409 (LSKE…KVCQ), 480-507 (MSHQYIQPPPPPPPPLMTGHHQFQPQPH), 522-550 (NSGVAGIQQPNNGMVVGDQQQQQQQHNGS), and 568-641 (LQLQ…YPNN). Basic and acidic residues predominate over residues 379–400 (QNNKSNEDQNNESRRGSQEKPA). Residues 486–495 (QPPPPPPPPL) are compositionally biased toward pro residues. The span at 522-533 (NSGVAGIQQPNN) shows a compositional bias: polar residues. Positions 569-579 (QLQQQQQQQQQ) are enriched in low complexity. Residues 597-606 (SFPPPPPPPL) show a composition bias toward pro residues. The span at 610–641 (QHQGLQQYSHAQQQQQQQHQQQQPYHQEYPNN) shows a compositional bias: low complexity.

Its subcellular location is the nucleus. Its function is as follows. Transcription factor that modulates the white-opaque switch. The polypeptide is White-opaque regulator 3 (WOR3) (Candida albicans (strain SC5314 / ATCC MYA-2876) (Yeast)).